Here is a 359-residue protein sequence, read N- to C-terminus: Ornithine cyclodeaminase (359 aa).

Residues arginine 53 and lysine 77 each coordinate L-ornithine. Residues threonine 92, arginine 120, 147–148 (AQ), aspartate 169, threonine 209, 232–235 (VGGD), lysine 239, and serine 300 contribute to the NAD(+) site. Residue arginine 120 coordinates L-ornithine. Aspartate 235 serves as a coordination point for L-ornithine. The Proton donor/acceptor role is filled by aspartate 235. An L-ornithine-binding site is contributed by valine 301.

Belongs to the ornithine cyclodeaminase/mu-crystallin family. Requires NAD(+) as cofactor.

It carries out the reaction L-ornithine = L-proline + NH4(+). The protein operates within amino-acid biosynthesis; L-proline biosynthesis; L-proline from L-ornithine: step 1/1. In terms of biological role, catalyzes the conversion of L-ornithine into L-proline with release of ammonia. The sequence is that of Ornithine cyclodeaminase from Brucella melitensis biotype 1 (strain ATCC 23456 / CCUG 17765 / NCTC 10094 / 16M).